A 595-amino-acid chain; its full sequence is Inactive metallocarboxypeptidase ecm14 (595 aa).

The signal sequence occupies residues 1 to 22 (MYRPDHVFVILCAVFFTGQVTA). A propeptide spanning residues 23–178 (VPAGTGITHP…MIYESQYPSR (156 aa)) is cleaved from the precursor. In terms of domain architecture, Peptidase M14 spans 206–527 (NYQPFPVILQ…NSVLVLGHFL (322 aa)). His-270 and Glu-273 together coordinate Zn(2+). Residues 270–273 (HARE), Arg-328, and 345–346 (DR) each bind substrate. Cysteines 339 and 362 form a disulfide. Asn-386 is a glycosylation site (N-linked (GlcNAc...) asparagine). His-402 lines the Zn(2+) pocket. 403–404 (SY) lines the substrate pocket.

It belongs to the peptidase M14 family. The cofactor is Zn(2+).

It localises to the vacuole. The protein localises to the secreted. Its function is as follows. Inactive carboxypeptidase that may play a role in cell wall organization and biogenesis. In Talaromyces marneffei (strain ATCC 18224 / CBS 334.59 / QM 7333) (Penicillium marneffei), this protein is Inactive metallocarboxypeptidase ecm14 (ecm14).